A 200-amino-acid chain; its full sequence is Pyridoxal 5'-phosphate synthase subunit PdxT (200 aa).

Residue glycine 50–serine 52 coordinates L-glutamine. Cysteine 82 serves as the catalytic Nucleophile. L-glutamine contacts are provided by residues arginine 110 and isoleucine 138 to arginine 139. Catalysis depends on charge relay system residues histidine 174 and glutamate 176.

It belongs to the glutaminase PdxT/SNO family. In terms of assembly, in the presence of PdxS, forms a dodecamer of heterodimers. Only shows activity in the heterodimer.

The enzyme catalyses aldehydo-D-ribose 5-phosphate + D-glyceraldehyde 3-phosphate + L-glutamine = pyridoxal 5'-phosphate + L-glutamate + phosphate + 3 H2O + H(+). It carries out the reaction L-glutamine + H2O = L-glutamate + NH4(+). Its pathway is cofactor biosynthesis; pyridoxal 5'-phosphate biosynthesis. In terms of biological role, catalyzes the hydrolysis of glutamine to glutamate and ammonia as part of the biosynthesis of pyridoxal 5'-phosphate. The resulting ammonia molecule is channeled to the active site of PdxS. The polypeptide is Pyridoxal 5'-phosphate synthase subunit PdxT (Oceanobacillus iheyensis (strain DSM 14371 / CIP 107618 / JCM 11309 / KCTC 3954 / HTE831)).